The primary structure comprises 163 residues: MHTRAIYPGTFDPITNGHVDLIERAAKLFKHVTIGIAANPSKQPRFTLEERVELVNRVTAHLDNVDVVGFSGLLVDFAKEQKASVLVRGLRAVSDFEYEFQLANMNRRLSPDLESVFLTPAEENSFISSTLVKEVALHGGDVSQFVHPEVAAALAAKLTSINT.

Thr-10 lines the substrate pocket. Residues 10–11 (TF) and His-18 each bind ATP. Substrate contacts are provided by Lys-42, Leu-74, and Arg-88. ATP contacts are provided by residues 89–91 (GLR), Glu-99, and 124–130 (NSFISST).

This sequence belongs to the bacterial CoaD family. Homohexamer. It depends on Mg(2+) as a cofactor.

It is found in the cytoplasm. It catalyses the reaction (R)-4'-phosphopantetheine + ATP + H(+) = 3'-dephospho-CoA + diphosphate. The protein operates within cofactor biosynthesis; coenzyme A biosynthesis; CoA from (R)-pantothenate: step 4/5. Its function is as follows. Reversibly transfers an adenylyl group from ATP to 4'-phosphopantetheine, yielding dephospho-CoA (dPCoA) and pyrophosphate. This chain is Phosphopantetheine adenylyltransferase, found in Shewanella putrefaciens (strain CN-32 / ATCC BAA-453).